The following is a 608-amino-acid chain: Kelch-like protein 10 (608 aa).

A BTB domain is found at 39 to 106; sequence CDVVIKVNGF…AYTRTVPITP (68 aa). Kelch repeat units lie at residues 292 to 339, 340 to 386, 388 to 433, 434 to 480, 481 to 527, and 529 to 574; these read ILFA…YLKG, YVYI…VLSN, IYAM…TLYG, KVYI…AYGE, HVYA…VVDD, and LFVV…VVPG. Residue serine 501 is modified to Phosphoserine.

Self-associates. Interacts with CUL3; indicative for the participation in an E3 ubiquitin ligase complex.

It is found in the cytoplasm. It participates in protein modification; protein ubiquitination. Functionally, may be a substrate-specific adapter of a CUL3-based E3 ubiquitin-protein ligase complex which mediates the ubiquitination and subsequent proteasomal degradation of target proteins during spermatogenesis. The sequence is that of Kelch-like protein 10 (Klhl10) from Rattus norvegicus (Rat).